The primary structure comprises 71 residues: UPF0434 protein APH_0052 (71 aa).

Basic and acidic residues predominate over residues 52–63 (RKLQPEEPKEGS). A disordered region spans residues 52 to 71 (RKLQPEEPKEGSELQSSDNQ).

It belongs to the UPF0434 family.

The protein is UPF0434 protein APH_0052 of Anaplasma phagocytophilum (strain HZ).